We begin with the raw amino-acid sequence, 1631 residues long: ABC transporter A family member 6 (1631 aa).

7 helical membrane passes run 25 to 45 (ICCE…ILAL), 242 to 262 (SVFI…DVVI), 285 to 305 (SWII…VVIF), 317 to 337 (GIVI…SFIF), 346 to 366 (FCGL…IFVS), 372 to 392 (VSVK…SIYI), and 416 to 436 (ILML…FEKV). The 234-residue stretch at 491-724 (ISIRNLRKEF…FGQGYLLTCN (234 aa)) folds into the ABC transporter 1 domain. 527-534 (GPNGCGKS) lines the ATP pocket. Transmembrane regions (helical) follow at residues 866 to 886 (SFFL…ILYK), 1047 to 1067 (AIIY…GSFA), 1099 to 1119 (WDFF…AGVI), 1127 to 1147 (FGSF…LGYL), 1158 to 1178 (AVGA…IASL), 1198 to 1218 (IIDL…IVFI), and 1242 to 1262 (LGTP…WILL). The 236-residue stretch at 1309 to 1544 (IQFKNLHKLF…FGAGYSIDVK (236 aa)) folds into the ABC transporter 2 domain. Position 1347–1354 (1347–1354 (GLNGGGKS)) interacts with ATP.

The protein belongs to the ABC transporter superfamily. ABCA family.

Its subcellular location is the membrane. The sequence is that of ABC transporter A family member 6 (abcA6) from Dictyostelium discoideum (Social amoeba).